Consider the following 640-residue polypeptide: Threonine--tRNA ligase (640 aa).

The TGS domain occupies M1–T61. Positions D242–P533 are catalytic. Residues C333, H384, and H510 each contribute to the Zn(2+) site.

This sequence belongs to the class-II aminoacyl-tRNA synthetase family. Homodimer. Zn(2+) is required as a cofactor.

It localises to the cytoplasm. The catalysed reaction is tRNA(Thr) + L-threonine + ATP = L-threonyl-tRNA(Thr) + AMP + diphosphate + H(+). Functionally, catalyzes the attachment of threonine to tRNA(Thr) in a two-step reaction: L-threonine is first activated by ATP to form Thr-AMP and then transferred to the acceptor end of tRNA(Thr). Also edits incorrectly charged L-seryl-tRNA(Thr). This Pseudomonas putida (strain ATCC 700007 / DSM 6899 / JCM 31910 / BCRC 17059 / LMG 24140 / F1) protein is Threonine--tRNA ligase.